Consider the following 548-residue polypeptide: Probable malate:quinone oxidoreductase (548 aa).

Belongs to the MQO family. FAD serves as cofactor.

It catalyses the reaction (S)-malate + a quinone = a quinol + oxaloacetate. Its pathway is carbohydrate metabolism; tricarboxylic acid cycle; oxaloacetate from (S)-malate (quinone route): step 1/1. This is Probable malate:quinone oxidoreductase from Escherichia coli O6:K15:H31 (strain 536 / UPEC).